A 131-amino-acid polypeptide reads, in one-letter code: Peptide methionine sulfoxide reductase MsrB (131 aa).

In terms of domain architecture, MsrB spans 8 to 130 (LDEWRSMLDP…NSVCIDLRPR (123 aa)). Residues cysteine 47, cysteine 50, cysteine 96, and cysteine 99 each coordinate Zn(2+). The active-site Nucleophile is the cysteine 119.

The protein belongs to the MsrB Met sulfoxide reductase family. It depends on Zn(2+) as a cofactor.

The enzyme catalyses L-methionyl-[protein] + [thioredoxin]-disulfide + H2O = L-methionyl-(R)-S-oxide-[protein] + [thioredoxin]-dithiol. The chain is Peptide methionine sulfoxide reductase MsrB from Pseudomonas putida (strain GB-1).